The chain runs to 558 residues: Tyrosine N-monooxygenase (558 aa).

Residues valine 13–threonine 33 traverse the membrane as a helical segment. Positions threonine 48–proline 67 are disordered. Over residues threonine 49–asparagine 65 the composition is skewed to low complexity. The heme b site is built by arginine 138, arginine 167, histidine 422, arginine 491, and cysteine 493.

It belongs to the cytochrome P450 family. Heme b is required as a cofactor.

Its subcellular location is the endoplasmic reticulum membrane. It carries out the reaction L-tyrosine + 2 reduced [NADPH--hemoprotein reductase] + 2 O2 = (E)-4-hydroxyphenylacetaldehyde oxime + 2 oxidized [NADPH--hemoprotein reductase] + CO2 + 3 H2O + 2 H(+). It catalyses the reaction L-tyrosine + reduced [NADPH--hemoprotein reductase] + O2 = N-hydroxy-L-tyrosine + oxidized [NADPH--hemoprotein reductase] + H2O + 2 H(+). The enzyme catalyses N-hydroxy-L-tyrosine + reduced [NADPH--hemoprotein reductase] + O2 = N,N-dihydroxy-L-tyrosine + oxidized [NADPH--hemoprotein reductase] + H2O + H(+). The catalysed reaction is N,N-dihydroxy-L-tyrosine + H(+) = (E)-4-hydroxyphenylacetaldehyde oxime + CO2 + H2O. Its pathway is secondary metabolite biosynthesis; dhurrin biosynthesis; dhurrin from L-tyrosine: step 1/3. In terms of biological role, cytochrome P450 involved in the biosynthesis of the cyanogenic glucoside dhurrin. Catalyzes the conversion of L-tyrosine to p-hydroxyphenylacetaldehyde oxime, via the N-hydroxy-L-tyrosine and N,N-dihydroxy-L-tyrosine intermediates. Produces the (E) isomer of the final oxime product. The protein is Tyrosine N-monooxygenase (CYP79A1) of Sorghum bicolor (Sorghum).